A 229-amino-acid polypeptide reads, in one-letter code: Transcriptional regulatory protein YxdJ (229 aa).

Residues 3–116 (KIMIVEDSED…IVLAKIKSQI (114 aa)) enclose the Response regulatory domain. The residue at position 52 (aspartate 52) is a 4-aspartylphosphate. The ompR/PhoB-type DNA-binding region spans 129-227 (EKVVEYAGVQ…VRGEGYQLRA (99 aa)).

Phosphorylated by YxdK.

It is found in the cytoplasm. Functionally, probable member of the two-component regulatory system YxdK/YxdJ. Positively regulates the expression of the yxdLMyxeA operon by direct interaction with its promoter region. Could also indirectly regulate the expression of the dlt operon. The chain is Transcriptional regulatory protein YxdJ (yxdJ) from Bacillus subtilis (strain 168).